The primary structure comprises 343 residues: ABC transporter riboflavin-binding protein RfuA (343 aa).

The first 19 residues, methionine 1–serine 19, serve as a signal peptide directing secretion. Cysteine 20 carries the N-palmitoyl cysteine lipid modification. A lipid anchor (S-diacylglycerol cysteine) is attached at cysteine 20. Residues serine 43–tyrosine 46, aspartate 124, glutamine 140, tyrosine 176, tryptophan 208, and aspartate 255 contribute to the riboflavin site.

It belongs to the BMP lipoprotein family. Monomer in solution. The complex is probably composed of two ATP-binding proteins (RfuB), two transmembrane proteins (RfuC and RfuD) and a solute-binding protein (RfuA).

It is found in the cell inner membrane. Probably part of the ABC transporter complex RfuABCD involved in riboflavin import. Binds riboflavin. The chain is ABC transporter riboflavin-binding protein RfuA from Treponema pallidum (strain Nichols).